A 246-amino-acid chain; its full sequence is ATP synthase subunit a, chloroplastic (246 aa).

5 helical membrane-spanning segments follow: residues 33-53 (VHGQ…GFGL), 99-119 (TIFL…WALI), 133-153 (INTT…AGIN), 201-221 (GVLV…LGLF), and 222-242 (TSAI…GESL).

The protein belongs to the ATPase A chain family. F-type ATPases have 2 components, CF(1) - the catalytic core - and CF(0) - the membrane proton channel. CF(1) has five subunits: alpha(3), beta(3), gamma(1), delta(1), epsilon(1). CF(0) has four main subunits: a, b, b' and c.

It is found in the plastid. It localises to the chloroplast thylakoid membrane. Functionally, key component of the proton channel; it plays a direct role in the translocation of protons across the membrane. The sequence is that of ATP synthase subunit a, chloroplastic from Oltmannsiellopsis viridis (Marine flagellate).